We begin with the raw amino-acid sequence, 205 residues long: UPF0056 membrane protein MJ1677 (205 aa).

Helical transmembrane passes span 7–27, 49–69, 70–90, 112–132, 145–165, and 185–205; these read ILAF…PVFI, ALAI…FFGI, SLDA…LDMV, IALM…TACM, FLVI…LLSA, and GLIL…GALL.

This sequence belongs to the UPF0056 (MarC) family.

The protein localises to the cell membrane. This is UPF0056 membrane protein MJ1677 from Methanocaldococcus jannaschii (strain ATCC 43067 / DSM 2661 / JAL-1 / JCM 10045 / NBRC 100440) (Methanococcus jannaschii).